An 872-amino-acid chain; its full sequence is Valine--tRNA ligase (872 aa).

The 'HIGH' region signature appears at proline 45–asparagine 55. The short motif at lysine 524–serine 528 is the 'KMSKS' region element. Lysine 527 serves as a coordination point for ATP.

It belongs to the class-I aminoacyl-tRNA synthetase family. ValS type 2 subfamily.

It is found in the cytoplasm. It catalyses the reaction tRNA(Val) + L-valine + ATP = L-valyl-tRNA(Val) + AMP + diphosphate. Functionally, catalyzes the attachment of valine to tRNA(Val). As ValRS can inadvertently accommodate and process structurally similar amino acids such as threonine, to avoid such errors, it has a 'posttransfer' editing activity that hydrolyzes mischarged Thr-tRNA(Val) in a tRNA-dependent manner. This is Valine--tRNA ligase from Natronomonas pharaonis (strain ATCC 35678 / DSM 2160 / CIP 103997 / JCM 8858 / NBRC 14720 / NCIMB 2260 / Gabara) (Halobacterium pharaonis).